Consider the following 424-residue polypeptide: Serine--tRNA ligase (424 aa).

230 to 232 contacts L-serine; the sequence is TAE. An ATP-binding site is contributed by 261-263; it reads RSE. E284 contributes to the L-serine binding site. 348 to 351 contributes to the ATP binding site; the sequence is EISS. Position 382 (S382) interacts with L-serine.

Belongs to the class-II aminoacyl-tRNA synthetase family. Type-1 seryl-tRNA synthetase subfamily. In terms of assembly, homodimer. The tRNA molecule binds across the dimer.

It is found in the cytoplasm. The catalysed reaction is tRNA(Ser) + L-serine + ATP = L-seryl-tRNA(Ser) + AMP + diphosphate + H(+). It carries out the reaction tRNA(Sec) + L-serine + ATP = L-seryl-tRNA(Sec) + AMP + diphosphate + H(+). The protein operates within aminoacyl-tRNA biosynthesis; selenocysteinyl-tRNA(Sec) biosynthesis; L-seryl-tRNA(Sec) from L-serine and tRNA(Sec): step 1/1. Catalyzes the attachment of serine to tRNA(Ser). Is also able to aminoacylate tRNA(Sec) with serine, to form the misacylated tRNA L-seryl-tRNA(Sec), which will be further converted into selenocysteinyl-tRNA(Sec). This is Serine--tRNA ligase from Solibacter usitatus (strain Ellin6076).